Consider the following 117-residue polypeptide: Heat shock 70 kDa protein 1-like (117 aa).

Residues 72-75 (ERAK) and 84-87 (GSTR) contribute to the ATP site.

Belongs to the heat shock protein 70 family. In terms of assembly, interacts with PRKN. As to expression, detected at higher levels in caput epididymal spermatazoa than in cauda epididymal spermatazoa (at protein level).

In terms of biological role, molecular chaperone implicated in a wide variety of cellular processes, including protection of the proteome from stress, folding and transport of newly synthesized polypeptides, activation of proteolysis of misfolded proteins and the formation and dissociation of protein complexes. Plays a pivotal role in the protein quality control system, ensuring the correct folding of proteins, the re-folding of misfolded proteins and controlling the targeting of proteins for subsequent degradation. This is achieved through cycles of ATP binding, ATP hydrolysis and ADP release, mediated by co-chaperones. The affinity for polypeptides is regulated by its nucleotide bound state. In the ATP-bound form, it has a low affinity for substrate proteins. However, upon hydrolysis of the ATP to ADP, it undergoes a conformational change that increases its affinity for substrate proteins. It goes through repeated cycles of ATP hydrolysis and nucleotide exchange, which permits cycles of substrate binding and release. Positive regulator of PRKN translocation to damaged mitochondria. This is Heat shock 70 kDa protein 1-like from Mesocricetus auratus (Golden hamster).